Consider the following 237-residue polypeptide: Putative N-acetylmannosamine-6-phosphate 2-epimerase (237 aa).

This sequence belongs to the NanE family.

The catalysed reaction is an N-acyl-D-glucosamine 6-phosphate = an N-acyl-D-mannosamine 6-phosphate. The protein operates within amino-sugar metabolism; N-acetylneuraminate degradation; D-fructose 6-phosphate from N-acetylneuraminate: step 3/5. Functionally, converts N-acetylmannosamine-6-phosphate (ManNAc-6-P) to N-acetylglucosamine-6-phosphate (GlcNAc-6-P). The polypeptide is Putative N-acetylmannosamine-6-phosphate 2-epimerase (Listeria monocytogenes serovar 1/2a (strain ATCC BAA-679 / EGD-e)).